The primary structure comprises 276 residues: E3 ubiquitin-protein ligase CCNB1IP1 (276 aa).

An RING-type; atypical zinc finger spans residues 10 to 52 (CNYRKCRIKLSGYAWVTACSHIFCDQHGSGEFSRSPAICPACN). Residues 146–182 (MKKVLEEYKKKFSDISEKLMERNRQYQKLQGLYDSLR) adopt a coiled-coil conformation.

In terms of assembly, interacts with CCNB1, UBE2L3 and NF2. In terms of processing, ubiquitinated; autoubiquitinated. Post-translationally, phosphorylated by CDK1 on serine or threonine residues (in vitro). Expressed predominantly in the testes and 17 day embryos (corresponding to prophase I in females). Weakly or not expressed in other tissues.

It is found in the nucleus. The protein resides in the chromosome. The catalysed reaction is S-ubiquitinyl-[E2 ubiquitin-conjugating enzyme]-L-cysteine + [acceptor protein]-L-lysine = [E2 ubiquitin-conjugating enzyme]-L-cysteine + N(6)-ubiquitinyl-[acceptor protein]-L-lysine.. It participates in protein modification; protein ubiquitination. Functionally, ubiquitin E3 ligase that acts as a limiting factor for crossing-over during meiosis: required during zygonema to limit the colocalization of RNF212 with MutS-gamma-associated recombination sites and thereby establish early differentiation of crossover and non-crossover sites. Later, it is directed by MutL-gamma to stably accumulate at designated crossover sites. Probably promotes the dissociation of RNF212 and MutS-gamma to allow the progression of recombination and the implementation of the final steps of crossing over. Modulates cyclin-B levels and participates in the regulation of cell cycle progression through the G2 phase. Overexpression causes delayed entry into mitosis. The chain is E3 ubiquitin-protein ligase CCNB1IP1 (Ccnb1ip1) from Mus musculus (Mouse).